The sequence spans 264 residues: Thymidylate synthase (264 aa).

A dUMP-binding site is contributed by R21. Position 51 (H51) interacts with (6R)-5,10-methylene-5,6,7,8-tetrahydrofolate. DUMP is bound at residue 126-127 (RR). C146 (nucleophile) is an active-site residue. DUMP is bound by residues 166-169 (RSVD), N177, and 207-209 (HLY). D169 contributes to the (6R)-5,10-methylene-5,6,7,8-tetrahydrofolate binding site. A263 provides a ligand contact to (6R)-5,10-methylene-5,6,7,8-tetrahydrofolate.

Belongs to the thymidylate synthase family. Bacterial-type ThyA subfamily. As to quaternary structure, homodimer.

It localises to the cytoplasm. The catalysed reaction is dUMP + (6R)-5,10-methylene-5,6,7,8-tetrahydrofolate = 7,8-dihydrofolate + dTMP. Its pathway is pyrimidine metabolism; dTTP biosynthesis. Its function is as follows. Catalyzes the reductive methylation of 2'-deoxyuridine-5'-monophosphate (dUMP) to 2'-deoxythymidine-5'-monophosphate (dTMP) while utilizing 5,10-methylenetetrahydrofolate (mTHF) as the methyl donor and reductant in the reaction, yielding dihydrofolate (DHF) as a by-product. This enzymatic reaction provides an intracellular de novo source of dTMP, an essential precursor for DNA biosynthesis. The chain is Thymidylate synthase from Geobacillus thermodenitrificans (strain NG80-2).